A 586-amino-acid polypeptide reads, in one-letter code: UvrABC system protein C (586 aa).

The GIY-YIG domain maps to 17–94; that stretch reads HKPGCYLWKD…IKQYKPRFNL (78 aa). Residues 201–236 form the UVR domain; sequence EQVLNHLQQQEIKASEQQNFEAARHFLDLQKAVLEL.

This sequence belongs to the UvrC family. In terms of assembly, interacts with UvrB in an incision complex.

It localises to the cytoplasm. Its function is as follows. The UvrABC repair system catalyzes the recognition and processing of DNA lesions. UvrC both incises the 5' and 3' sides of the lesion. The N-terminal half is responsible for the 3' incision and the C-terminal half is responsible for the 5' incision. The sequence is that of UvrABC system protein C from Mycoplasma pneumoniae (strain ATCC 29342 / M129 / Subtype 1) (Mycoplasmoides pneumoniae).